The sequence spans 483 residues: MENLEQTCASLRAQIAATEAQLAGLKRELEIAEQAAADVKAQDTTITITADEGRINGTRTWPLLSEEYKRYGRQMIVPQVGLQGQLKLRSARVLIVGAGGLGCPAALYLAGAGVGTLGLVDGDTVENSNLHRQVLHRSKNVGKFKVDSAIEYLREAHLTPQEAPSIFKDYDIILDCTDNPATRYLISDTAVLLGKPLVSASALRTEGQLMVLNYPPRPVGDKSGGPCYRCVFPKPPPANSVVSCADGGILGPVVGTMGVLQALEAIKVITSPAVNPSASPPSLLIFSAYSTPPFRTIRLRARRANCAVCSADASVTLETLKIGSTDYVFFCGVAGLEATLSPEERISPLELRKRHPKEVPQDGGSISKEPTIIDVREKVQFDICNLEHSVNIPISTILSSASNAANADANAQPSLPSWLPRELASADSTNPIYVVCRHGNDSQIAVRRLKELGLDRGGQRYVGDIQGGLRAWREQIDPDWPEY.

Residues Gly100, Asp121, Ser128 to Arg132, Lys145, and Asp178 to Asn179 each bind ATP. Zn(2+)-binding residues include Cys227 and Cys230. Cys244 functions as the Glycyl thioester intermediate; for adenylyltransferase activity in the catalytic mechanism. 2 residues coordinate Zn(2+): Cys306 and Cys309. Residues Ile366–Pro481 form the Rhodanese domain. Residue Cys436 is the Cysteine persulfide intermediate; for sulfurtransferase activity of the active site.

This sequence in the N-terminal section; belongs to the HesA/MoeB/ThiF family. UBA4 subfamily. Zn(2+) is required as a cofactor.

The protein localises to the cytoplasm. The protein resides in the cytosol. It carries out the reaction [molybdopterin-synthase sulfur-carrier protein]-C-terminal Gly-Gly + ATP + H(+) = [molybdopterin-synthase sulfur-carrier protein]-C-terminal Gly-Gly-AMP + diphosphate. It catalyses the reaction [molybdopterin-synthase sulfur-carrier protein]-C-terminal Gly-Gly-AMP + S-sulfanyl-L-cysteinyl-[cysteine desulfurase] + AH2 = [molybdopterin-synthase sulfur-carrier protein]-C-terminal-Gly-aminoethanethioate + L-cysteinyl-[cysteine desulfurase] + A + AMP + 2 H(+). The protein operates within tRNA modification; 5-methoxycarbonylmethyl-2-thiouridine-tRNA biosynthesis. Plays a central role in 2-thiolation of mcm(5)S(2)U at tRNA wobble positions of cytosolic tRNA(Lys), tRNA(Glu) and tRNA(Gln). Also essential during biosynthesis of the molybdenum cofactor. Acts by mediating the C-terminal thiocarboxylation of sulfur carriers urm1 and mocs2a. Its N-terminus first activates urm1 and mocs2a as acyl-adenylates (-COAMP), then the persulfide sulfur on the catalytic cysteine is transferred to urm1 and mocs2a to form thiocarboxylation (-COSH) of their C-terminus. The reaction probably involves hydrogen sulfide that is generated from the persulfide intermediate and that acts as a nucleophile towards urm1 and mocs2a. Subsequently, a transient disulfide bond is formed. Does not use thiosulfate as sulfur donor; nfs1 probably acting as a sulfur donor for thiocarboxylation reactions. This is Adenylyltransferase and sulfurtransferase uba4 from Neosartorya fischeri (strain ATCC 1020 / DSM 3700 / CBS 544.65 / FGSC A1164 / JCM 1740 / NRRL 181 / WB 181) (Aspergillus fischerianus).